Reading from the N-terminus, the 193-residue chain is Protein hunchback (193 aa).

Basic residues predominate over residues 18-31; the sequence is HLHHHHAHHSHHRH. 2 disordered regions span residues 18 to 57 and 153 to 193; these read HLHH…SNTN and LTPP…KYMA. A compositionally biased stretch (low complexity) spans 34–44; it reads NSNSNASSPHQ. The span at 174 to 193 shows a compositional bias: basic and acidic residues; the sequence is EPEKEHDLMSNSSEDMKYMA.

Belongs to the hunchback C2H2-type zinc-finger protein family.

The protein localises to the nucleus. In terms of biological role, gap class segmentation protein that controls development of head structures. The protein is Protein hunchback (hb) of Drosophila petalopeza (Fruit fly).